We begin with the raw amino-acid sequence, 182 residues long: NADH-ubiquinone oxidoreductase 20 kDa subunit (182 aa).

Residues Cys57, Cys58, Cys122, and Cys152 each coordinate [4Fe-4S] cluster.

This sequence belongs to the complex I 20 kDa subunit family. The cofactor is [4Fe-4S] cluster.

The protein localises to the mitochondrion. It catalyses the reaction a ubiquinone + NADH + 5 H(+)(in) = a ubiquinol + NAD(+) + 4 H(+)(out). The protein is NADH-ubiquinone oxidoreductase 20 kDa subunit (NAD10) of Reclinomonas americana.